The sequence spans 1061 residues: NACHT, LRR and PYD domains-containing protein 12 (1061 aa).

The region spanning 1–95 (MLRTAGRDGL…WERGQREDLV (95 aa)) is the Pyrin domain. Positions 129–201 (YRDYVRRKFR…SPIKIETLFE (73 aa)) constitute an FISNA domain. Residues 211-528 (RTVVMQGAAG…EFFAAMYYIL (318 aa)) enclose the NACHT domain. 217–224 (GAAGIGKS) lines the ATP pocket. LRR repeat units lie at residues 828-848 (HLVE…RLLC), 857-878 (RLRT…ELAS), 885-906 (SLRE…LLCE), 914-935 (KLQT…GLSV), 942-962 (NLRE…WLLA), 971-992 (RLQK…NLYF), 999-1020 (TLTD…LLCK), and 1028-1049 (KLRV…RLAA).

The protein belongs to the NLRP family. In terms of assembly, interacts (via pyrin domain) with ASC. Interacts (via pyrin domain) with FAF1 (via UBA domain). Interacts with MAP3K14; this interaction promotes proteasomal degradation of MAP3K14. Interacts with NOD2; this interaction promotes degradation of NOD2 through the ubiquitin-proteasome pathway. Interacts with HSPA1A and HSPA8. Interacts with HSP90AA1. Interacts with TRIM25; this interaction inhibits RIGI-mediated signaling pathway. As to expression, detected only in peripheral blood leukocytes, predominantly in eosinophils and granulocytes, and at lower levels in monocytes.

The protein localises to the cytoplasm. In terms of biological role, plays an essential role as an potent mitigator of inflammation. Primarily expressed in dendritic cells and macrophages, inhibits both canonical and non-canonical NF-kappa-B and ERK activation pathways. Functions as a negative regulator of NOD2 by targeting it to degradation via the proteasome pathway. In turn, promotes bacterial tolerance. Also inhibits the RIGI-mediated immune signaling against RNA viruses by reducing the E3 ubiquitin ligase TRIM25-mediated 'Lys-63'-linked RIGI activation but enhancing the E3 ubiquitin ligase RNF125-mediated 'Lys-48'-linked RIGI degradation. Also acts as a negative regulator of inflammatory response to mitigate obesity and obesity-associated diseases in adipose tissue. This chain is NACHT, LRR and PYD domains-containing protein 12 (NLRP12), found in Homo sapiens (Human).